The chain runs to 215 residues: Sodium channel regulatory subunit beta-2 (215 aa).

The first 29 residues, 1–29, serve as a signal peptide directing secretion; that stretch reads MHRDAWLPRPAFSLTGLSLFFSLVPSGRS. The Extracellular segment spans residues 30 to 157; it reads MEVTVPTTLS…LEVPPERDST (128 aa). The region spanning 32–154 is the Ig-like C2-type domain; it reads VTVPTTLSVL…QVLLEVPPER (123 aa). Asparagine 42, asparagine 66, and asparagine 74 each carry an N-linked (GlcNAc...) asparagine glycan. Cystine bridges form between cysteine 50–cysteine 127 and cysteine 72–cysteine 75. The helical transmembrane segment at 158-179 threads the bilayer; the sequence is VAVIVGASVGGFLAVVILVLMV. The Cytoplasmic portion of the chain corresponds to 180–215; the sequence is VKCVRRKKEQKLSTDDLKTEEEGKTDGEGNAEDGAK. Residues 187–215 are disordered; sequence KEQKLSTDDLKTEEEGKTDGEGNAEDGAK. Residues 189–215 show a composition bias toward basic and acidic residues; the sequence is QKLSTDDLKTEEEGKTDGEGNAEDGAK. Serine 192 carries the post-translational modification Phosphoserine. Position 204 is a phosphothreonine (threonine 204).

This sequence belongs to the sodium channel auxiliary subunit SCN2B (TC 8.A.17) family. In terms of assembly, a voltage-gated sodium (Nav) channel consists of an ion-conducting pore-forming alpha subunit functional on its own that is regulated by one or more beta subunits. The beta subunit SCN2B is disulfide-linked to the pore-forming alpha subunit. Interacts with SCN1A; regulatory subunit of SCN1A/Nav1.1. Interacts with SCN2A; regulatory subunit of SCN2A/Nav1.2. Interacts with SCN3A; regulatory subunit of SCN3A/Nav1.3. Interacts with SCN5A; regulatory subunit of SCN5A/Nav1.5. Interacts with SCN8A; regulatory subunit of SCN8A/Nav1.6. Interacts with SCN9A; regulatory subunit of SCN9A/Nav1.7. Interacts with SCN10A; regulatory subunit of SCN10A/Nav1.8. Interacts with TNR; may play a crucial role in clustering and regulation of activity of SCN2B-containing Nav channels at nodes of Ranvier.

The protein localises to the cell membrane. It is found in the cell projection. Its subcellular location is the axon. Regulatory subunit of multiple voltage-gated sodium (Nav) channels directly mediating the depolarization of excitable membranes. Navs, also called VGSCs (voltage-gated sodium channels) or VDSCs (voltage-dependent sodium channels), operate by switching between closed and open conformations depending on the voltage difference across the membrane. In the open conformation they allow Na(+) ions to selectively pass through the pore, along their electrochemical gradient. The influx of Na+ ions provokes membrane depolarization, initiating the propagation of electrical signals throughout cells and tissues. The accessory beta subunits participate in localization and functional modulation of the Nav channels. Modulates the activity of SCN1A/Nav1.1, SCN2A/Nav1.2, SCN2A/Nav1.3, SCN5A/Nav1.5, SCN8A/Nav1.6, SCN9A/Nav1.7 and SCN10A/Nav1.8. The polypeptide is Sodium channel regulatory subunit beta-2 (Rattus norvegicus (Rat)).